The following is an 83-amino-acid chain: Mitochondrial import inner membrane translocase subunit TIM10 (83 aa).

An N-acetylalanine modification is found at Ala-2. The short motif at 36–61 (CFNKCVDKRYKEAELNMGENSCIDRC) is the Twin CX3C motif element. 2 disulfides stabilise this stretch: Cys-36/Cys-61 and Cys-40/Cys-57.

The protein belongs to the small Tim family. Heterohexamer; composed of 3 copies of TIM9 and 3 copies of TIM10, named soluble 70 kDa complex. The complex associates with the TIM22 component of the TIM22 complex. Interacts with multi-pass transmembrane proteins in transit. As to expression, expressed in roots, flowers, young cotyledons and leaves.

The protein localises to the mitochondrion intermembrane space. Its function is as follows. Mitochondrial intermembrane chaperone that participates in the import and insertion of multi-pass transmembrane proteins into the mitochondrial inner membrane. May also be required for the transfer of beta-barrel precursors from the TOM complex to the sorting and assembly machinery (SAM complex) of the outer membrane. Acts as a chaperone-like protein that protects the hydrophobic precursors from aggregation and guide them through the mitochondrial intermembrane space. The sequence is that of Mitochondrial import inner membrane translocase subunit TIM10 (TIM10) from Arabidopsis thaliana (Mouse-ear cress).